The sequence spans 229 residues: uncharacterized protein (229 aa).

Positions 24-78 (LRKWRSIFNASQSDLARKLGISPSVISDYESGRRKPGTAFLKKFVCALIELDGER) constitute an HTH cro/C1-type domain. Positions 35 to 54 (QSDLARKLGISPSVISDYES) form a DNA-binding region, H-T-H motif.

This is an uncharacterized protein from Archaeoglobus fulgidus (strain ATCC 49558 / DSM 4304 / JCM 9628 / NBRC 100126 / VC-16).